Consider the following 1012-residue polypeptide: Putative cellulose synthase-like protein D5 (1012 aa).

Residues 1–85 (MSGDYANYTV…APSSNKSLLV (85 aa)) form a disordered region. Residues 20 to 37 (PSGGAPPAAPSAGGARPG) are compositionally biased toward low complexity. Residues 57-69 (GGGDDGAKMDRRL) are compositionally biased toward basic and acidic residues. Transmembrane regions (helical) follow at residues 150–170 (ILSP…LFLV) and 180–200 (ALWL…SWLL). Asp-280 is a catalytic residue. Residues 597–620 (PRQGSEAMPGAGGGRSGGGSVGGD) are disordered. Residues 606-618 (GAGGGRSGGGSVG) show a composition bias toward gly residues. Asp-717 is a catalytic residue. Transmembrane regions (helical) follow at residues 799-819 (LFLI…QFIV), 825-845 (TFLS…LLEV), 871-891 (LAAV…SFTL), 914-934 (SLFI…VVGV), 948-968 (LLGG…FAKG), and 978-998 (TIVY…WITI).

Belongs to the glycosyltransferase 2 family. Plant cellulose synthase-like D subfamily.

The protein localises to the golgi apparatus membrane. In terms of biological role, thought to be a Golgi-localized beta-glycan synthase that polymerize the backbones of noncellulosic polysaccharides (hemicelluloses) of plant cell wall. This is Putative cellulose synthase-like protein D5 (CSLD5) from Oryza sativa subsp. indica (Rice).